Consider the following 404-residue polypeptide: Acetate kinase (404 aa).

Residue N9 participates in Mg(2+) binding. K16 is a binding site for ATP. Residue R100 coordinates substrate. D157 functions as the Proton donor/acceptor in the catalytic mechanism. ATP contacts are provided by residues 215–219 (HLGNG), 290–292 (DMR), and 335–339 (GIGEN). Residue E386 participates in Mg(2+) binding.

It belongs to the acetokinase family. Homodimer. The cofactor is Mg(2+). It depends on Mn(2+) as a cofactor.

It localises to the cytoplasm. The catalysed reaction is acetate + ATP = acetyl phosphate + ADP. Its pathway is metabolic intermediate biosynthesis; acetyl-CoA biosynthesis; acetyl-CoA from acetate: step 1/2. In terms of biological role, catalyzes the formation of acetyl phosphate from acetate and ATP. Can also catalyze the reverse reaction. This Methylocella silvestris (strain DSM 15510 / CIP 108128 / LMG 27833 / NCIMB 13906 / BL2) protein is Acetate kinase.